Here is a 245-residue protein sequence, read N- to C-terminus: Orotidine 5'-phosphate decarboxylase (245 aa).

Substrate contacts are provided by residues aspartate 22, lysine 44, 71–80 (DLKFHDIPNT), threonine 131, arginine 192, glutamine 201, glycine 221, and arginine 222. The active-site Proton donor is lysine 73.

Belongs to the OMP decarboxylase family. Type 1 subfamily. Homodimer.

It carries out the reaction orotidine 5'-phosphate + H(+) = UMP + CO2. The protein operates within pyrimidine metabolism; UMP biosynthesis via de novo pathway; UMP from orotate: step 2/2. Its function is as follows. Catalyzes the decarboxylation of orotidine 5'-monophosphate (OMP) to uridine 5'-monophosphate (UMP). The sequence is that of Orotidine 5'-phosphate decarboxylase from Escherichia coli (strain 55989 / EAEC).